We begin with the raw amino-acid sequence, 240 residues long: Purine nucleoside phosphorylase RC0672 (240 aa).

Residues His-60, Cys-96, and His-113 each coordinate Zn(2+).

It belongs to the purine nucleoside phosphorylase YfiH/LACC1 family. Homodimer. It depends on Cu(2+) as a cofactor. The cofactor is Zn(2+).

The catalysed reaction is adenosine + phosphate = alpha-D-ribose 1-phosphate + adenine. It carries out the reaction S-methyl-5'-thioadenosine + phosphate = 5-(methylsulfanyl)-alpha-D-ribose 1-phosphate + adenine. It catalyses the reaction inosine + phosphate = alpha-D-ribose 1-phosphate + hypoxanthine. The enzyme catalyses adenosine + H2O + H(+) = inosine + NH4(+). Purine nucleoside enzyme that catalyzes the phosphorolysis of adenosine and inosine nucleosides, yielding D-ribose 1-phosphate and the respective free bases, adenine and hypoxanthine. Also catalyzes the phosphorolysis of S-methyl-5'-thioadenosine into adenine and S-methyl-5-thio-alpha-D-ribose 1-phosphate. Also has adenosine deaminase activity. In Rickettsia conorii (strain ATCC VR-613 / Malish 7), this protein is Purine nucleoside phosphorylase RC0672.